Consider the following 254-residue polypeptide: Type III pantothenate kinase (254 aa).

6 to 13 (DVGNTNTV) lines the ATP pocket. Residues Tyr100 and 107 to 110 (GADR) contribute to the substrate site. Asp109 functions as the Proton acceptor in the catalytic mechanism. Asp129 contributes to the K(+) binding site. Thr132 serves as a coordination point for ATP. Thr184 contributes to the substrate binding site.

This sequence belongs to the type III pantothenate kinase family. As to quaternary structure, homodimer. Requires NH4(+) as cofactor. The cofactor is K(+).

It localises to the cytoplasm. It carries out the reaction (R)-pantothenate + ATP = (R)-4'-phosphopantothenate + ADP + H(+). The protein operates within cofactor biosynthesis; coenzyme A biosynthesis; CoA from (R)-pantothenate: step 1/5. In terms of biological role, catalyzes the phosphorylation of pantothenate (Pan), the first step in CoA biosynthesis. The sequence is that of Type III pantothenate kinase from Anaeromyxobacter sp. (strain Fw109-5).